A 239-amino-acid chain; its full sequence is MEFDPAKINTSSIDHVTILQYIDEPNDIRLTVCIIRNINNITYYINITKINTHLANQFRAWKKRIAGRDYITNLSRDTGIQQSKLTETIRNCQKNRNIYGLYIHYNLVINVVIDWITDVIVQSILRGLVNWYIANNTYTPNNTTTISELDIIKILDKYEDVYRVSKEKECGICYEVVYSKRLENDRYFGLLDSCNHIFCITCINIWHKTRRETGASDNCPICRTRFRNITMSKFYKLVN.

A KilA-N domain is found at 21–131; that stretch reads YIDEPNDIRL…QSILRGLVNW (111 aa). The RING-type zinc finger occupies 170–223; that stretch reads CGICYEVVYSKRLENDRYFGLLDSCNHIFCITCINIWHKTRRETGASDNCPICR.

The protein belongs to the orthopoxvirus OPG021 family.

The protein resides in the host cytoplasm. Functionally, RING-finger E3 ubiquitin ligase which catalyzes the formation of both 'Lys-48'- and 'Lys-63'-linked polyubiquitin chains. Plays an important role in virulence by acting as an anti-apoptotic factor. In Homo sapiens (Human), this protein is Host range factor p28 (OPG021).